Consider the following 70-residue polypeptide: UPF0270 protein VP2791 (70 aa).

The protein belongs to the UPF0270 family.

The chain is UPF0270 protein VP2791 from Vibrio parahaemolyticus serotype O3:K6 (strain RIMD 2210633).